Consider the following 502-residue polypeptide: Ribose import ATP-binding protein RbsA (502 aa).

2 ABC transporter domains span residues 3 to 239 (VTMR…VGRE) and 249 to 493 (AAPG…TGGA). 35 to 42 (GENGAGKS) serves as a coordination point for ATP.

The protein belongs to the ABC transporter superfamily. Ribose importer (TC 3.A.1.2.1) family. The complex is composed of an ATP-binding protein (RbsA), two transmembrane proteins (RbsC) and a solute-binding protein (RbsB).

It localises to the cell inner membrane. It carries out the reaction D-ribose(out) + ATP + H2O = D-ribose(in) + ADP + phosphate + H(+). Functionally, part of the ABC transporter complex RbsABC involved in ribose import. Responsible for energy coupling to the transport system. This Chromobacterium violaceum (strain ATCC 12472 / DSM 30191 / JCM 1249 / CCUG 213 / NBRC 12614 / NCIMB 9131 / NCTC 9757 / MK) protein is Ribose import ATP-binding protein RbsA.